The primary structure comprises 639 residues: Ubiquitin-like modifier-activating enzyme ATG7 (639 aa).

Residues 322 to 327 (GAGTLG) carry the GXGXXG motif motif. Catalysis depends on Cys502, which acts as the Glycyl thioester intermediate.

Belongs to the ATG7 family. Homodimer.

Its subcellular location is the cytoplasm. It is found in the preautophagosomal structure. Functionally, E1-like activating enzyme involved in the 2 ubiquitin-like systems required for cytoplasm to vacuole transport (Cvt) and autophagy. Activates ATG12 for its conjugation with ATG5 and ATG8 for its conjugation with phosphatidylethanolamine. Both systems are needed for the ATG8 association to Cvt vesicles and autophagosomes membranes. Autophagy is essential for maintenance of amino acid levels and protein synthesis under nitrogen starvation. Required for selective autophagic degradation of the nucleus (nucleophagy) as well as for mitophagy which contributes to regulate mitochondrial quantity and quality by eliminating the mitochondria to a basal level to fulfill cellular energy requirements and preventing excess ROS production. Plays a role in the regulation of filamentous growth and chronological longevity. The sequence is that of Ubiquitin-like modifier-activating enzyme ATG7 (APG7) from Candida albicans (strain SC5314 / ATCC MYA-2876) (Yeast).